The primary structure comprises 379 residues: Queuine tRNA-ribosyltransferase (379 aa).

The active-site Proton acceptor is the D94. Substrate contacts are provided by residues D94–F98, D148, Q191, and G218. The RNA binding stretch occupies residues G249–A255. D268 acts as the Nucleophile in catalysis. Residues T273 to R277 are RNA binding; important for wobble base 34 recognition. Zn(2+) is bound by residues C306, C308, C311, and H337.

The protein belongs to the queuine tRNA-ribosyltransferase family. In terms of assembly, homodimer. Within each dimer, one monomer is responsible for RNA recognition and catalysis, while the other monomer binds to the replacement base PreQ1. Requires Zn(2+) as cofactor.

The enzyme catalyses 7-aminomethyl-7-carbaguanine + guanosine(34) in tRNA = 7-aminomethyl-7-carbaguanosine(34) in tRNA + guanine. The protein operates within tRNA modification; tRNA-queuosine biosynthesis. Its function is as follows. Catalyzes the base-exchange of a guanine (G) residue with the queuine precursor 7-aminomethyl-7-deazaguanine (PreQ1) at position 34 (anticodon wobble position) in tRNAs with GU(N) anticodons (tRNA-Asp, -Asn, -His and -Tyr). Catalysis occurs through a double-displacement mechanism. The nucleophile active site attacks the C1' of nucleotide 34 to detach the guanine base from the RNA, forming a covalent enzyme-RNA intermediate. The proton acceptor active site deprotonates the incoming PreQ1, allowing a nucleophilic attack on the C1' of the ribose to form the product. After dissociation, two additional enzymatic reactions on the tRNA convert PreQ1 to queuine (Q), resulting in the hypermodified nucleoside queuosine (7-(((4,5-cis-dihydroxy-2-cyclopenten-1-yl)amino)methyl)-7-deazaguanosine). This chain is Queuine tRNA-ribosyltransferase, found in Staphylococcus epidermidis (strain ATCC 35984 / DSM 28319 / BCRC 17069 / CCUG 31568 / BM 3577 / RP62A).